Reading from the N-terminus, the 485-residue chain is UDP-N-acetylmuramate--L-alanine ligase (485 aa).

An ATP-binding site is contributed by 120-126 (GSHGKTT).

Belongs to the MurCDEF family.

The protein resides in the cytoplasm. The catalysed reaction is UDP-N-acetyl-alpha-D-muramate + L-alanine + ATP = UDP-N-acetyl-alpha-D-muramoyl-L-alanine + ADP + phosphate + H(+). The protein operates within cell wall biogenesis; peptidoglycan biosynthesis. Cell wall formation. The chain is UDP-N-acetylmuramate--L-alanine ligase from Rickettsia massiliae (strain Mtu5).